A 297-amino-acid polypeptide reads, in one-letter code: Undecaprenyl-diphosphatase (297 aa).

The next 7 membrane-spanning stretches (helical) occupy residues 58-78 (PGVA…LSYF), 103-123 (AQMG…GLLI), 138-158 (LAAI…AEQL), 168-188 (LRLA…IPGV), 208-228 (AARF…LVEL), 243-263 (VLAI…AWLL), and 274-294 (FVVY…TGTL).

This sequence belongs to the UppP family.

The protein localises to the cell inner membrane. It catalyses the reaction di-trans,octa-cis-undecaprenyl diphosphate + H2O = di-trans,octa-cis-undecaprenyl phosphate + phosphate + H(+). Its function is as follows. Catalyzes the dephosphorylation of undecaprenyl diphosphate (UPP). Confers resistance to bacitracin. This chain is Undecaprenyl-diphosphatase, found in Synechococcus sp. (strain ATCC 27144 / PCC 6301 / SAUG 1402/1) (Anacystis nidulans).